The following is a 339-amino-acid chain: Heat-inducible transcription repressor HrcA (339 aa).

This sequence belongs to the HrcA family.

Functionally, negative regulator of class I heat shock genes (grpE-dnaK-dnaJ and groELS operons). Prevents heat-shock induction of these operons. This Paraburkholderia phymatum (strain DSM 17167 / CIP 108236 / LMG 21445 / STM815) (Burkholderia phymatum) protein is Heat-inducible transcription repressor HrcA.